A 504-amino-acid polypeptide reads, in one-letter code: Sperm motility kinase 3A (504 aa).

A Protein kinase domain is found at 28–276; that stretch reads YVMLETIGHG…VAEVMVHPWV (249 aa). ATP contacts are provided by residues 34–42 and K57; that span reads IGHGGCATV. The active-site Proton acceptor is D147. The UBA domain maps to 294-334; the sequence is KPDPAIVKAMGHIGFQAQDIEDSLRQRKFNQTMASYCLLKK. Disordered regions lie at residues 389–421 and 441–468; these read VCGK…MDHT and NSSE…WPRG. The span at 441–451 shows a compositional bias: polar residues; that stretch reads NSSEESTQGHT.

This sequence belongs to the protein kinase superfamily. CAMK Ser/Thr protein kinase family. Smok subfamily. In terms of tissue distribution, testis-specific. Expressed in the testis from 22 days postpartum (22 dpp).

It carries out the reaction L-seryl-[protein] + ATP = O-phospho-L-seryl-[protein] + ADP + H(+). The catalysed reaction is L-threonyl-[protein] + ATP = O-phospho-L-threonyl-[protein] + ADP + H(+). Its function is as follows. May play a role in sperm motility, especially in the regulation of flagellar function. The chain is Sperm motility kinase 3A from Mus musculus (Mouse).